The sequence spans 459 residues: Aluminum-activated malate transporter 1 (459 aa).

Over 1–52 (MDIDHGRESDGEMVGTIASCGLLLHSLLAGLGRRAAGFARKVGGAAREDPRR) the chain is Extracellular. 2 consecutive transmembrane segments (helical) span residues 53–73 (VAHS…YFVT) and 74–94 (PLFN…VVVM). Residues 95 to 108 (EYTVGATLSKGLNR) are Extracellular-facing. Residues 109-129 (ALATLVAGCIAVGAHQLAELA) traverse the membrane as a helical segment. The Cytoplasmic portion of the chain corresponds to 130–137 (ERCGDQGE). A helical transmembrane segment spans residues 138–158 (PIVLTVLVFFVASAATFLRFI). Over 159-160 (PE) the chain is Extracellular. The helical transmembrane segment at 161–181 (IKAKYDYGVTIFILTFGLVAV) threads the bilayer. Residues 182 to 199 (SSYRVEELIQLAHQRFYT) lie on the Cytoplasmic side of the membrane. A helical membrane pass occupies residues 200-220 (IAVGVFICLCTTVFLFPVWAG). Residues 221-459 (EDVHKLASGN…DEPLPDVVIL (239 aa)) lie on the Extracellular side of the membrane.

This sequence belongs to the aromatic acid exporter (TC 2.A.85) family. In terms of tissue distribution, detected in root tips.

The protein localises to the cell membrane. Activated by external aluminum. The enhancement of malate transport is not due to alteration in the selectivity properties but is due to an increased anion permeability. Malate transporter critical for aluminum tolerance. Permeable to chloride, nitrate, sulfate and malate. This chain is Aluminum-activated malate transporter 1 (ALMT1), found in Triticum aestivum (Wheat).